Consider the following 476-residue polypeptide: 3-isopropylmalate dehydratase large subunit (476 aa).

The [4Fe-4S] cluster site is built by Cys-357, Cys-417, and Cys-420.

Belongs to the aconitase/IPM isomerase family. LeuC type 1 subfamily. As to quaternary structure, heterodimer of LeuC and LeuD. The cofactor is [4Fe-4S] cluster.

The catalysed reaction is (2R,3S)-3-isopropylmalate = (2S)-2-isopropylmalate. The protein operates within amino-acid biosynthesis; L-leucine biosynthesis; L-leucine from 3-methyl-2-oxobutanoate: step 2/4. Its function is as follows. Catalyzes the isomerization between 2-isopropylmalate and 3-isopropylmalate, via the formation of 2-isopropylmaleate. The polypeptide is 3-isopropylmalate dehydratase large subunit (Mycobacterium leprae (strain TN)).